We begin with the raw amino-acid sequence, 570 residues long: Mitoguardin 1 (570 aa).

Residues 34–54 form a helical membrane-spanning segment; it reads GLKKIIAVAAISGVSLIFLAC.

The protein belongs to the mitoguardin family. In terms of assembly, homodimer and heterodimer; forms heterodimers with miga2.

Its subcellular location is the mitochondrion outer membrane. In terms of biological role, regulator of mitochondrial fusion: acts by forming homo- and heterodimers at the mitochondrial outer membrane and facilitating the formation of pld6/MitoPLD dimers. May act by regulating phospholipid metabolism via pld6/MitoPLD. This chain is Mitoguardin 1, found in Xenopus laevis (African clawed frog).